The primary structure comprises 79 residues: uncharacterized protein (79 aa).

Residues 4-43 (QENEDLRKQLVEASELLKSQAKELKDAHQQQKLALQDFLE) are a coiled coil.

This is an uncharacterized protein from Homo sapiens (Human).